Consider the following 197-residue polypeptide: Protocatechuate 3,4-dioxygenase alpha chain (197 aa).

Residue Arg130 coordinates 3,4-dihydroxybenzoate.

The protein belongs to the intradiol ring-cleavage dioxygenase family. As to quaternary structure, the enzyme is an oligomer of 12 copies of the alpha and beta chains. The cofactor is Fe(3+).

The enzyme catalyses 3,4-dihydroxybenzoate + O2 = 3-carboxy-cis,cis-muconate + 2 H(+). The protein operates within aromatic compound metabolism; beta-ketoadipate pathway; 3-carboxy-cis,cis-muconate from 3,4-dihydroxybenzoate: step 1/1. In terms of biological role, plays an essential role in the utilization of numerous aromatic and hydroaromatic compounds via the beta-ketoadipate pathway. The chain is Protocatechuate 3,4-dioxygenase alpha chain (pcaG) from Burkholderia cepacia (Pseudomonas cepacia).